The chain runs to 97 residues: Co-chaperonin GroES (97 aa).

This sequence belongs to the GroES chaperonin family. In terms of assembly, heptamer of 7 subunits arranged in a ring. Interacts with the chaperonin GroEL.

It is found in the cytoplasm. Functionally, together with the chaperonin GroEL, plays an essential role in assisting protein folding. The GroEL-GroES system forms a nano-cage that allows encapsulation of the non-native substrate proteins and provides a physical environment optimized to promote and accelerate protein folding. GroES binds to the apical surface of the GroEL ring, thereby capping the opening of the GroEL channel. This is Co-chaperonin GroES from Buchnera aphidicola subsp. Thelaxes suberi.